The following is a 273-amino-acid chain: Inactive endochitinase At2g43600 (273 aa).

Positions 1–22 (MTIKNVIFSLFILAILAETVFS) are cleaved as a signal peptide. The Chitin-binding type-1 domain occupies 23 to 61 (QNCMDTSCPGLKECCSRWGFCGTKDEYCGFFCFSGPCNI). Cystine bridges form between Cys25–Cys37, Cys30–Cys43, Cys36–Cys50, and Cys54–Cys59. Residues 78–273 (GKIETVITSA…GVTPDQGLDC (196 aa)) form a catalytic region. N-linked (GlcNAc...) asparagine glycosylation is present at Asn99.

The protein belongs to the glycosyl hydrolase 19 family. Chitinase class I subfamily.

In Arabidopsis thaliana (Mouse-ear cress), this protein is Inactive endochitinase At2g43600.